The chain runs to 249 residues: Ubiquinone/menaquinone biosynthesis C-methyltransferase UbiE (249 aa).

S-adenosyl-L-methionine-binding positions include threonine 72, aspartate 93, and 121–122 (DA).

It belongs to the class I-like SAM-binding methyltransferase superfamily. MenG/UbiE family.

The enzyme catalyses a 2-demethylmenaquinol + S-adenosyl-L-methionine = a menaquinol + S-adenosyl-L-homocysteine + H(+). It catalyses the reaction a 2-methoxy-6-(all-trans-polyprenyl)benzene-1,4-diol + S-adenosyl-L-methionine = a 5-methoxy-2-methyl-3-(all-trans-polyprenyl)benzene-1,4-diol + S-adenosyl-L-homocysteine + H(+). The protein operates within quinol/quinone metabolism; menaquinone biosynthesis; menaquinol from 1,4-dihydroxy-2-naphthoate: step 2/2. It participates in cofactor biosynthesis; ubiquinone biosynthesis. Functionally, methyltransferase required for the conversion of demethylmenaquinol (DMKH2) to menaquinol (MKH2) and the conversion of 2-polyprenyl-6-methoxy-1,4-benzoquinol (DDMQH2) to 2-polyprenyl-3-methyl-6-methoxy-1,4-benzoquinol (DMQH2). This Teredinibacter turnerae (strain ATCC 39867 / T7901) protein is Ubiquinone/menaquinone biosynthesis C-methyltransferase UbiE.